The following is a 692-amino-acid chain: Methionine--tRNA ligase (692 aa).

Positions Pro15 to His25 match the 'HIGH' region motif. Zn(2+) is bound by residues Cys146, Cys149, Cys159, and Cys162. The 'KMSKS' region motif lies at Lys332–Ser336. Lys335 contacts ATP. The tract at residues Thr552–Pro577 is disordered. Residues Ala556–Glu566 show a composition bias toward basic and acidic residues. The region spanning Asp591–Lys692 is the tRNA-binding domain.

It belongs to the class-I aminoacyl-tRNA synthetase family. MetG type 1 subfamily. In terms of assembly, homodimer. The cofactor is Zn(2+).

The protein resides in the cytoplasm. It carries out the reaction tRNA(Met) + L-methionine + ATP = L-methionyl-tRNA(Met) + AMP + diphosphate. In terms of biological role, is required not only for elongation of protein synthesis but also for the initiation of all mRNA translation through initiator tRNA(fMet) aminoacylation. The chain is Methionine--tRNA ligase from Shewanella sediminis (strain HAW-EB3).